We begin with the raw amino-acid sequence, 1136 residues long: Pesticidal crystal protein Cry4B protoxin (1136 aa).

Residues 84-282 (TPERVWNDFM…PADKIDNTKL (199 aa)) form a domain I region. A domain II region spans residues 283–466 (SKTEFTREIY…SNRVSFAWTH (184 aa)). Residues 467 to 641 (KIVDPNNQIY…PITQSVLDET (175 aa)) form a domain III region.

Belongs to the delta endotoxin family. In the presence of micelles active toxin forms oligomers that can be fit into cryo-EM maps as trimers. Binds to host (A.gambiae) cadherin AgCad1 (also called BT-R3), probably on the cell surface. Activated toxin may bind its host AgCad1 receptor as a monomer, but also forms an oligomer that is not active. Mg(2+) is required as a cofactor. Treatment of recombinant protein with A.aegypti 3rd instar larvae midgut extract for 1 hour yields major bands of 72 and 45 kDa, the combined proteins are toxic to mosquitoes. Longer digestion, which removes the 72 kDa protein, yields a non-toxic preparation. Proteolysis by yields a 65 kDa toxic protein and 48 and 17 kDa fragments which are not toxic. Host (A.gambiae) larval midgut; binds to host brush border membranes, probably to cadherin-AgCad1 (Cad1, also called BT-R3).

It is found in the spore. Its activity is regulated as follows. Toxic activity on Trichoplusia ni insect cells stably transfected with the AgCad1/BT-R3 receptor leads to oncosis, cell death characterized by cell swelling, membrane blebbing and depletion of energy reserves. Cell death is blocked by EDTA (but not EGTA) and is partially prevented by pretreatment with NF449 (inhibits G-s-alpha-60A and adenylyl cyclase, AC) and 2',5'-dideoxyadenosine 3'-diphosphate (ddADP, inhibits AC), while H-89 and PKAI 14-22 (both inhibit protein kinase A), ouabain (inhibits Na+/K+-ATPase) and a cell exocytosis inhibitor (Exo1) nearly completely prevent the action of the toxin in this system. The cAMP analog pCPT-cAMP and the AC activator FSK enhance toxicity. A pesticidal protein active against Aedes and Anopheles mosquito species; activity on Culex species is strain dependent. It remains toxic to permethrin-resistant strains of A.gambiae. Following activation of the protoxin by mosquito larvae midgut extract (or by chymotrypsin or trypsin treatment) it becomes insecticidal. Causes mosquito cell death by activating a host G-protein-coupled receptor which subsequently activates adenylyl cyclase and increases cAMP production. cAMP activates protein kinase A which sets off a series of downstream events which includes increased exocytosis (probably bringing more receptor to the cell membrane), Na+/K+-ATPase activation and eventual host cell death. Another group suggests that alkaline phosphatase serves as the insect receptor and that the protein forms pores in insect cell membranes. The sequence is that of Pesticidal crystal protein Cry4B protoxin from Bacillus thuringiensis subsp. israelensis.